A 386-amino-acid polypeptide reads, in one-letter code: Hydrazine synthase subunit beta (386 aa).

A signal peptide spans 1–34 (MVIRRKMNKMIRKGMIGAVMLGAAVAISGGVATA).

Part of the hydrazine synthase complex that forms an elongated dimer of heterotrimers composed of one alpha, one beta and one gamma subunit.

It localises to the anammoxosome. It functions in the pathway nitrogen metabolism. Its function is as follows. Component of the hydrazine synthase complex that catalyzes the condensation of nitric oxide (NO) with ammonium to form hydrazine. The beta subunit may play a role in modulating transport of the hydroxylamine intermediate through a tunnel between the gamma and alpha subunit's active site. Is involved in anaerobic ammonium oxidation (anammox), a biological process in which nitrite is used as the electron acceptor in the conversion of ammonium to dinitrogen gas (N2) and water; this bacterial process has a major role in the Earth's nitrogen cycle and has been estimated to synthesize up to 50% of the dinitrogen gas emitted into our atmosphere from the oceans. In Kuenenia stuttgartiensis, this protein is Hydrazine synthase subunit beta.